The following is a 490-amino-acid chain: Betaine aldehyde dehydrogenase (490 aa).

N93 serves as a coordination point for K(+). Residue 150–152 (GAW) participates in NAD(+) binding. Residue K162 is the Charge relay system of the active site. Residue 176–179 (KPSE) coordinates NAD(+). V180 serves as a coordination point for K(+). Residue 230 to 233 (GTAT) coordinates NAD(+). L246 is a K(+) binding site. E252 functions as the Proton acceptor in the catalytic mechanism. The NAD(+) site is built by G254, C286, and E387. C286 functions as the Nucleophile in the catalytic mechanism. At C286 the chain carries Cysteine sulfenic acid (-SOH). K(+) contacts are provided by K457 and G460. The active-site Charge relay system is the E464.

Belongs to the aldehyde dehydrogenase family. Dimer of dimers. K(+) is required as a cofactor.

The enzyme catalyses betaine aldehyde + NAD(+) + H2O = glycine betaine + NADH + 2 H(+). The protein operates within amine and polyamine biosynthesis; betaine biosynthesis via choline pathway; betaine from betaine aldehyde: step 1/1. In terms of biological role, involved in the biosynthesis of the osmoprotectant glycine betaine. Catalyzes the irreversible oxidation of betaine aldehyde to the corresponding acid. The protein is Betaine aldehyde dehydrogenase of Xanthomonas euvesicatoria pv. vesicatoria (strain 85-10) (Xanthomonas campestris pv. vesicatoria).